A 648-amino-acid chain; its full sequence is Adhesion G-protein coupled receptor G1 (648 aa).

The signal sequence occupies residues 1–24 (MKQNPAKTARMWIIICLLFVLGQA). Residues 25–370 (TDNDRDFKMC…STVRHLKALT (346 aa)) are Extracellular-facing. An intrachain disulfide couples Cys34 to Cys96. Asn62, Asn91, Asn114, Asn146, Asn222, Asn262, and Asn286 each carry an N-linked (GlcNAc...) asparagine glycan. Residues Cys127 and Cys176 are joined by a disulfide bond. The region spanning 214 to 361 (MDEEFTGHNF…AILVQVEQKS (148 aa)) is the GAIN-B domain. 2 cysteine pairs are disulfide-bonded: Cys313-Cys343 and Cys331-Cys345. Positions 313–361 (CVSWDTKQDNEVNWKDDGCDTVKINEEQTECHCNHLTYFAILVQVEQKS) are GPS. Residues 349–361 (TYFAILVQVEQKS) form a stachel region. The helical transmembrane segment at 371–391 (FITAVGCAVSLVSCLVLFYWL) threads the bilayer. Residues 392-408 (CKRRRGKKNQISLVHRG) lie on the Cytoplasmic side of the membrane. The chain crosses the membrane as a helical span at residues 409 to 429 (LVVAIFLLCLFFILTGILANV). Residues 430–443 (ANETVCQLTGSLLH) lie on the Extracellular side of the membrane. The N-linked (GlcNAc...) asparagine glycan is linked to Asn431. A helical transmembrane segment spans residues 444 to 464 (YGLLSTLCWMAMEVFHTFLLV). The Cytoplasmic segment spans residues 465 to 471 (RKVFNSP). A helical transmembrane segment spans residues 472-492 (LPIWIFYLMGFGFPFLLVSIL). Topologically, residues 493–530 (LSVGDIYGERKIKPSDDVNNPYRMCWMTEGDKSQLAHY) are extracellular. A helical transmembrane segment spans residues 531–551 (IINIGLLAVVVSSGLVMLFLV). The Cytoplasmic segment spans residues 552–563 (VREIRNRPDWKK). The chain crosses the membrane as a helical span at residues 564 to 586 (IHVAFLSIWGLTCLYGTTWALGF). At 587–595 (LDFGPFSEV) the chain is on the extracellular side. Residues 596-618 (TLFLFCIINSLQGFFLMLRYYAL) traverse the membrane as a helical segment. The Cytoplasmic portion of the chain corresponds to 619–648 (ERMKKKDVSSSDGSSSGSSKQHMLQTNEKS).

It belongs to the G-protein coupled receptor 2 family. LN-TM7 subfamily. As to quaternary structure, heterodimer of 2 chains generated by proteolytic processing; the large extracellular N-terminal fragment (ADGRG1 NT) and the membrane-bound C-terminal fragment (ADGRG1-CT) predominantly remain associated and non-covalently linked. Post-translationally, autoproteolytically cleaved into 2 fragments; the large extracellular N-terminal fragment (ADGRG1 NT) and the membrane-bound C-terminal fragment (ADGRG1 CT) predominantly remain associated and non-covalently linked.

It localises to the cell membrane. Its activity is regulated as follows. Forms a heterodimer of 2 chains generated by proteolytic processing that remain associated through non-covalent interactions mediated by the GAIN-B domain. In the inactivated receptor, the Stachel sequence (also named stalk) is embedded in the GAIN-B domain, where it adopts a beta-strand conformation. On activation, the Stachel moves into the 7 transmembrane region and adopts a twisted hook-shaped configuration that forms contacts within the receptor, leading to coupling of a G-alpha protein, which activates signaling. The cleaved GAIN-B and N-terminal domains can then dissociate from the rest of the receptor. Its function is as follows. Adhesion G-protein coupled receptor (aGPCR), which is involved in oligodendrocyte development and maintenance of peripheral myelin. Ligand binding causes a conformation change that triggers signaling via guanine nucleotide-binding proteins (G proteins) and modulates the activity of downstream effectors, such as RhoA pathway. Adgrg1 is coupled to G(12) and/or G(13) G proteins (gna12 and gna13, respectively) and mediates the activation Rho small GTPases. Adgrg1-dependent RhoA signaling promotes timely radial sorting of axons. Required to establish proper myelin thickness and facilitate organization of the myelin sheath in the mature peripheral nervous system. This is Adhesion G-protein coupled receptor G1 from Danio rerio (Zebrafish).